The primary structure comprises 57 residues: uncharacterized protein (57 aa).

A helical membrane pass occupies residues 24–44 (LWVTLLLTMFFTAVEIIGGLI).

It to cation A.eutrophus efflux system protein CzcD.

The protein localises to the cell membrane. This is an uncharacterized protein from Bacillus caldolyticus.